The chain runs to 282 residues: Hydrogenase expression/formation protein HoxQ (282 aa).

This sequence belongs to the HupH/HyaF family.

The polypeptide is Hydrogenase expression/formation protein HoxQ (hoxQ) (Cupriavidus necator (strain ATCC 17699 / DSM 428 / KCTC 22496 / NCIMB 10442 / H16 / Stanier 337) (Ralstonia eutropha)).